A 155-amino-acid polypeptide reads, in one-letter code: Desiccation-related protein clone PCC6-19 (155 aa).

The tract at residues Met1–His155 is disordered. Composition is skewed to gly residues over residues Ala27–Gln39 and Gly47–Gly76. Positions Gly83 to Glu92 are enriched in low complexity. Over residues Thr118–Gln135 the composition is skewed to polar residues. Positions Gln136–His155 are enriched in basic and acidic residues.

Belongs to the plant dehydrin family.

The protein is Desiccation-related protein clone PCC6-19 of Craterostigma plantagineum (Blue gem).